The following is a 62-amino-acid chain: Alpha-conotoxin-like Qc1.2 (62 aa).

The signal sequence occupies residues 1–21 (MGMRMMFTVFLLVALATTVAS). The propeptide occupies 22 to 48 (FTLDRASNGRNAAADDKPSDWIALAIK). At Q49 the chain carries Pyrrolidone carboxylic acid. Disulfide bonds link C50/C56 and C51/C61.

The protein belongs to the conotoxin A superfamily. In terms of tissue distribution, expressed by the venom duct.

It localises to the secreted. Functionally, alpha-conotoxins bind to the nicotinic acetylcholine receptors (nAChR) and inhibit them. This synthetic peptide (10 uM) selectively, but weakly inhibits both rat neuronal alpha-3-beta-2/CHRNA3-CHRNB2 (63%) and alpha-3-beta-4/CHRNA3-CHRNB4 (37%) subtypes of nAChR. The chain is Alpha-conotoxin-like Qc1.2 from Conus quercinus (Oak cone).